A 473-amino-acid chain; its full sequence is Ribosomal RNA small subunit methyltransferase F (473 aa).

S-adenosyl-L-methionine is bound by residues 124–130 (ASAPGSK), Glu148, Asp175, and Asp193. Cys246 (nucleophile) is an active-site residue.

The protein belongs to the class I-like SAM-binding methyltransferase superfamily. RsmB/NOP family.

It localises to the cytoplasm. The enzyme catalyses cytidine(1407) in 16S rRNA + S-adenosyl-L-methionine = 5-methylcytidine(1407) in 16S rRNA + S-adenosyl-L-homocysteine + H(+). In terms of biological role, specifically methylates the cytosine at position 1407 (m5C1407) of 16S rRNA. The protein is Ribosomal RNA small subunit methyltransferase F of Aliivibrio salmonicida (strain LFI1238) (Vibrio salmonicida (strain LFI1238)).